The chain runs to 366 residues: Histidinol-phosphate aminotransferase (366 aa).

An N6-(pyridoxal phosphate)lysine modification is found at lysine 228.

Belongs to the class-II pyridoxal-phosphate-dependent aminotransferase family. Histidinol-phosphate aminotransferase subfamily. In terms of assembly, homodimer. Pyridoxal 5'-phosphate serves as cofactor.

The enzyme catalyses L-histidinol phosphate + 2-oxoglutarate = 3-(imidazol-4-yl)-2-oxopropyl phosphate + L-glutamate. It functions in the pathway amino-acid biosynthesis; L-histidine biosynthesis; L-histidine from 5-phospho-alpha-D-ribose 1-diphosphate: step 7/9. In Corynebacterium diphtheriae (strain ATCC 700971 / NCTC 13129 / Biotype gravis), this protein is Histidinol-phosphate aminotransferase.